The chain runs to 492 residues: MTEQKVDWEPVIGLETHVQLGTNSKIFTSASTSFGDDPNTHIDPIVCGLPGTLPVLNKKVLEFAVKASMALNLKIAKHCKFDRKQYFYPDLPKNYQISQFDEPIAEEGWIEVEVAEKGKETYLKKIGIERLHMEEDAGKLVHAGSDRLSGSKYSLVDYNRAGVALAEIVSKPDLRSGREASEYASEIRRIVRYLGVSDGNMQEGSLRCDVNISVRRGPNAPFGTKVEIKNMNSFSAIQKACEYEIKRQISTYESGGIVHQETRLWDETKQLTKSMRSKEGSSDYRYFPDPDLGPIEVSVELQEKWRSELPELPSSKRHRYAEELGLSVYDARVLTDDYQMARYFEIVVLEGADPKLASNWITGDIAAHINANKKSFENLLLTPKQLAEMLLLISQGKISGKIAKEILPELLEKGGSPKELVEERGLGMISDPKVLGAIVDQLLSDYPNEVESYRGGKNKLQGFFVGQLMKKTSGKADPKLGNQILTKKLKGE.

This sequence belongs to the GatB/GatE family. GatB subfamily. In terms of assembly, heterotrimer of A, B and C subunits.

It catalyses the reaction L-glutamyl-tRNA(Gln) + L-glutamine + ATP + H2O = L-glutaminyl-tRNA(Gln) + L-glutamate + ADP + phosphate + H(+). The catalysed reaction is L-aspartyl-tRNA(Asn) + L-glutamine + ATP + H2O = L-asparaginyl-tRNA(Asn) + L-glutamate + ADP + phosphate + 2 H(+). In terms of biological role, allows the formation of correctly charged Asn-tRNA(Asn) or Gln-tRNA(Gln) through the transamidation of misacylated Asp-tRNA(Asn) or Glu-tRNA(Gln) in organisms which lack either or both of asparaginyl-tRNA or glutaminyl-tRNA synthetases. The reaction takes place in the presence of glutamine and ATP through an activated phospho-Asp-tRNA(Asn) or phospho-Glu-tRNA(Gln). The sequence is that of Aspartyl/glutamyl-tRNA(Asn/Gln) amidotransferase subunit B from Prochlorococcus marinus (strain SARG / CCMP1375 / SS120).